The following is a 254-amino-acid chain: PF03932 family protein CutC (254 aa).

It belongs to the CutC family.

It localises to the cytoplasm. The chain is PF03932 family protein CutC from Yersinia pestis bv. Antiqua (strain Antiqua).